A 286-amino-acid polypeptide reads, in one-letter code: Aldo-keto reductase MAV_4483 (286 aa).

Catalysis depends on Tyr-61, which acts as the Proton donor. The NADPH site is built by Leu-201, Val-203, Val-239, Arg-241, Ser-242, Arg-247, and Asn-251.

Belongs to the aldo/keto reductase family.

In Mycobacterium avium (strain 104), this protein is Aldo-keto reductase MAV_4483.